The following is a 937-amino-acid chain: Leucine--tRNA ligase (937 aa).

The short motif at 34–44 is the 'HIGH' region element; that stretch reads PYPSGAMHIGH. Positions 609 to 613 match the 'KMSKS' region motif; the sequence is KMSSS.

It belongs to the class-I aminoacyl-tRNA synthetase family.

It is found in the cytoplasm. The catalysed reaction is tRNA(Leu) + L-leucine + ATP = L-leucyl-tRNA(Leu) + AMP + diphosphate. The sequence is that of Leucine--tRNA ligase from Methanothermobacter thermautotrophicus (strain ATCC 29096 / DSM 1053 / JCM 10044 / NBRC 100330 / Delta H) (Methanobacterium thermoautotrophicum).